A 160-amino-acid chain; its full sequence is MSGLGAPAEVLPPVAGMRLAVVATRWHAEITDALLAGALRAAKDAGLAAAPAVVRVSGAVELPVIAAALAARHDAVVALGVVIRGGTPHFDYVCQFVTAGLARVTLDARVPVGFGVLTCDTVEQARDRAGLPGSSEDKGREATLAALDTAAVLRDLELAG.

5-amino-6-(D-ribitylamino)uracil is bound by residues W26, 59 to 61 (AVE), and 81 to 83 (VVI). A (2S)-2-hydroxy-3-oxobutyl phosphate-binding site is contributed by 86 to 87 (GT). H89 acts as the Proton donor in catalysis. F114 contacts 5-amino-6-(D-ribitylamino)uracil. R128 is a (2S)-2-hydroxy-3-oxobutyl phosphate binding site.

It belongs to the DMRL synthase family.

It carries out the reaction (2S)-2-hydroxy-3-oxobutyl phosphate + 5-amino-6-(D-ribitylamino)uracil = 6,7-dimethyl-8-(1-D-ribityl)lumazine + phosphate + 2 H2O + H(+). The protein operates within cofactor biosynthesis; riboflavin biosynthesis; riboflavin from 2-hydroxy-3-oxobutyl phosphate and 5-amino-6-(D-ribitylamino)uracil: step 1/2. Functionally, catalyzes the formation of 6,7-dimethyl-8-ribityllumazine by condensation of 5-amino-6-(D-ribitylamino)uracil with 3,4-dihydroxy-2-butanone 4-phosphate. This is the penultimate step in the biosynthesis of riboflavin. The sequence is that of 6,7-dimethyl-8-ribityllumazine synthase from Frankia casuarinae (strain DSM 45818 / CECT 9043 / HFP020203 / CcI3).